A 76-amino-acid polypeptide reads, in one-letter code: Kappa-actitoxin-Avd4g (76 aa).

The signal sequence occupies residues 1–19 (MNKALFLCLVVLCAAVVFA). Residues 20-31 (AEDLQKAKHAPF) constitute a propeptide that is removed on maturation. Cystine bridges form between cysteine 37-cysteine 72, cysteine 39-cysteine 65, and cysteine 55-cysteine 73.

It belongs to the sea anemone type 3 (BDS) potassium channel toxin family. Moderately expressed in the ectodermal tissue from the distal and proximal tentacles, body wall, and oral disk.

Its subcellular location is the secreted. The protein localises to the nematocyst. In terms of biological role, blocks Kv3 voltage-gated potassium channels. Reduces blood pressure. This Anemonia viridis (Snakelocks anemone) protein is Kappa-actitoxin-Avd4g.